Reading from the N-terminus, the 65-residue chain is Large ribosomal subunit protein bL33c (65 aa).

It belongs to the bacterial ribosomal protein bL33 family.

The protein localises to the plastid. It localises to the chloroplast. This chain is Large ribosomal subunit protein bL33c, found in Psilotum nudum (Whisk fern).